The chain runs to 332 residues: Glycerol-3-phosphate dehydrogenase [NAD(P)+] (332 aa).

Residues S11, F12, K32, and K106 each coordinate NADPH. Sn-glycerol 3-phosphate contacts are provided by K106, G137, and S139. A141 is a binding site for NADPH. Sn-glycerol 3-phosphate is bound by residues K192, D245, S255, R256, and N257. The Proton acceptor role is filled by K192. Residue R256 participates in NADPH binding. 2 residues coordinate NADPH: V280 and E282.

This sequence belongs to the NAD-dependent glycerol-3-phosphate dehydrogenase family.

The protein resides in the cytoplasm. The catalysed reaction is sn-glycerol 3-phosphate + NAD(+) = dihydroxyacetone phosphate + NADH + H(+). It catalyses the reaction sn-glycerol 3-phosphate + NADP(+) = dihydroxyacetone phosphate + NADPH + H(+). It functions in the pathway membrane lipid metabolism; glycerophospholipid metabolism. Its function is as follows. Catalyzes the reduction of the glycolytic intermediate dihydroxyacetone phosphate (DHAP) to sn-glycerol 3-phosphate (G3P), the key precursor for phospholipid synthesis. This chain is Glycerol-3-phosphate dehydrogenase [NAD(P)+], found in Staphylococcus aureus (strain USA300).